A 225-amino-acid polypeptide reads, in one-letter code: Cytidylate kinase (225 aa).

An ATP-binding site is contributed by 11 to 19; sequence GPAAAGKST.

It belongs to the cytidylate kinase family. Type 1 subfamily.

Its subcellular location is the cytoplasm. It carries out the reaction CMP + ATP = CDP + ADP. It catalyses the reaction dCMP + ATP = dCDP + ADP. The sequence is that of Cytidylate kinase from Bacillus cytotoxicus (strain DSM 22905 / CIP 110041 / 391-98 / NVH 391-98).